A 4462-amino-acid chain; its full sequence is Dynein axonemal heavy chain 17 (4462 aa).

The interval 1-1808 (MTMAPDVRLE…FANICDAQIQ (1808 aa)) is stem. TPR repeat units follow at residues 1019 to 1052 (TWTD…VSKC) and 1702 to 1736 (IWWT…QLNV). 4 AAA regions span residues 1809–2030 (YSYE…VLVV), 2090–2311 (KIIK…FGFK), 2417–2665 (ELDP…IFQG), and 2763–3012 (SYNE…ERRY). ATP-binding positions include 1847-1854 (GPAGTGKT), 2128-2135 (GNAGSGKS), 2455-2462 (GNAGTGKS), and 2801-2808 (GVGGSGKQ). Coiled-coil stretches lie at residues 3027-3086 (YQNL…LIQV) and 3257-3309 (DVAP…EKIK). The segment at 3027-3313 (YQNLLAKKRT…TAEKIKCQQE (287 aa)) is stalk. AAA stretches follow at residues 3405-3632 (LTDD…EIEE) and 3842-4068 (IKNF…VLYN). Residues 4147–4182 (PESPYLYGLHPNAEIGFLTVTSEKLFRTVLEMQPKE) form a TPR 3 repeat.

This sequence belongs to the dynein heavy chain family. Consists of at least two heavy chains and a number of intermediate and light chains. In terms of tissue distribution, expressed in testis. Expressed in spermatozoa (at protein level). Not detected in airway epithelial cells (at protein level).

The protein resides in the cytoplasm. It is found in the cytoskeleton. The protein localises to the flagellum axoneme. Force generating protein component of the outer dynein arms (ODAs) in the sperm flagellum. Produces force towards the minus ends of microtubules. Dynein has ATPase activity; the force-producing power stroke is thought to occur on release of ADP. Plays a major role in sperm motility, implicated in sperm flagellar assembly and beating. The protein is Dynein axonemal heavy chain 17 of Homo sapiens (Human).